Consider the following 173-residue polypeptide: MILSGLEIKDKLGSDIVIEPYDDSRLNPNSYNLRLHNELLVYDNNELDMKKPNTASPLIIPEEGLLLETGKLYLGRTIEYTESHNYVPMLEGRSSIGRLGLFVHVTAGFGDVGFCGFWTLEIFCVHPIRVYPGVEICQIFYHTIEGKYENYKSGKYQHNKGIQPSLLYKDFEK.

Residues 93 to 98 (RSSIGR), aspartate 111, 119 to 121 (TLE), glutamine 138, and tyrosine 151 contribute to the dCTP site. The Proton donor/acceptor role is filled by glutamate 121.

It belongs to the dCTP deaminase family. In terms of assembly, homotrimer.

It catalyses the reaction dCTP + 2 H2O = dUMP + NH4(+) + diphosphate. It participates in pyrimidine metabolism; dUMP biosynthesis; dUMP from dCTP: step 1/1. Functionally, bifunctional enzyme that catalyzes both the deamination of dCTP to dUTP and the hydrolysis of dUTP to dUMP without releasing the toxic dUTP intermediate. In Cytophaga hutchinsonii (strain ATCC 33406 / DSM 1761 / CIP 103989 / NBRC 15051 / NCIMB 9469 / D465), this protein is dCTP deaminase, dUMP-forming.